Here is a 1221-residue protein sequence, read N- to C-terminus: DNA-directed RNA polymerase subunit beta' (1221 aa).

Positions 60, 62, 75, and 78 each coordinate Zn(2+). D449, D451, and D453 together coordinate Mg(2+). Zn(2+) contacts are provided by C820, C894, C901, and C904.

This sequence belongs to the RNA polymerase beta' chain family. As to quaternary structure, the RNAP catalytic core consists of 2 alpha, 1 beta, 1 beta' and 1 omega subunit. When a sigma factor is associated with the core the holoenzyme is formed, which can initiate transcription. Mg(2+) is required as a cofactor. The cofactor is Zn(2+).

The enzyme catalyses RNA(n) + a ribonucleoside 5'-triphosphate = RNA(n+1) + diphosphate. In terms of biological role, DNA-dependent RNA polymerase catalyzes the transcription of DNA into RNA using the four ribonucleoside triphosphates as substrates. This chain is DNA-directed RNA polymerase subunit beta', found in Ligilactobacillus salivarius (strain UCC118) (Lactobacillus salivarius).